Reading from the N-terminus, the 248-residue chain is Probable transcriptional regulatory protein PFL_4766 (248 aa).

Belongs to the TACO1 family.

It localises to the cytoplasm. In Pseudomonas fluorescens (strain ATCC BAA-477 / NRRL B-23932 / Pf-5), this protein is Probable transcriptional regulatory protein PFL_4766.